The primary structure comprises 201 residues: Large ribosomal subunit protein eL15 (201 aa).

It belongs to the eukaryotic ribosomal protein eL15 family.

The chain is Large ribosomal subunit protein eL15 (RPL15) from Quercus suber (Cork oak).